We begin with the raw amino-acid sequence, 375 residues long: Queuine tRNA-ribosyltransferase (375 aa).

Asp90 (proton acceptor) is an active-site residue. Residues 90–94 (DSGGF), Asp144, Gln193, and Gly220 contribute to the substrate site. The RNA binding stretch occupies residues 251–257 (GVGTPED). The Nucleophile role is filled by Asp270. The RNA binding; important for wobble base 34 recognition stretch occupies residues 275-279 (TRNAR). The Zn(2+) site is built by Cys308, Cys310, Cys313, and His339.

It belongs to the queuine tRNA-ribosyltransferase family. As to quaternary structure, homodimer. Within each dimer, one monomer is responsible for RNA recognition and catalysis, while the other monomer binds to the replacement base PreQ1. It depends on Zn(2+) as a cofactor.

The catalysed reaction is 7-aminomethyl-7-carbaguanine + guanosine(34) in tRNA = 7-aminomethyl-7-carbaguanosine(34) in tRNA + guanine. It participates in tRNA modification; tRNA-queuosine biosynthesis. Its function is as follows. Catalyzes the base-exchange of a guanine (G) residue with the queuine precursor 7-aminomethyl-7-deazaguanine (PreQ1) at position 34 (anticodon wobble position) in tRNAs with GU(N) anticodons (tRNA-Asp, -Asn, -His and -Tyr). Catalysis occurs through a double-displacement mechanism. The nucleophile active site attacks the C1' of nucleotide 34 to detach the guanine base from the RNA, forming a covalent enzyme-RNA intermediate. The proton acceptor active site deprotonates the incoming PreQ1, allowing a nucleophilic attack on the C1' of the ribose to form the product. After dissociation, two additional enzymatic reactions on the tRNA convert PreQ1 to queuine (Q), resulting in the hypermodified nucleoside queuosine (7-(((4,5-cis-dihydroxy-2-cyclopenten-1-yl)amino)methyl)-7-deazaguanosine). In Herminiimonas arsenicoxydans, this protein is Queuine tRNA-ribosyltransferase.